The primary structure comprises 325 residues: MANALASATCERCKGGFAPAEKIVNSNGELYHEQCFVCAQCFQQFPEGLFYEFEGRKYCEHDFQMLFAPCCHQCGEFIIGRVIKAMNNSWHPECFRCDLCQEVLADIGFVKNAGRHLCRPCHNREKARGLGKYICQKCHAIIDEQPLIFKNDPYHPDHFNCANCGKELTADARELKGELYCLPCHDKMGVPICGACRRPIEGRVVNAMGKQWHVEHFVCAKCEKPFLGHRHYERKGLAYCETHYNQLFGDVCFHCNRVIEGDVVSALNKAWCVSCFACSTCNTKLTLKNKFVEFDMKPVCKKCYEKFPLELKKRLKKLSETLGRK.

Position 2 is an N-acetylalanine (Ala-2). 5 LIM zinc-binding domains span residues 10 to 62 (CERC…CEHD), 71 to 121 (CHQC…CRPC), 135 to 184 (CQKC…CLPC), 193 to 243 (CGAC…CETH), and 252 to 303 (CFHC…CKKC).

As to quaternary structure, component of the heterotrimeric IPP (ILK-PINCH-PARVIN) complex composed of ILK, LIMS1/PINCH and PARVA; the complex binds to F-actin via the C-terminal tail of LIMS1 and the N-terminal region of PARVA, promoting F-actin filament bundling. Formation of the IPP complex is dependent on protein kinase C and precedes integrin-mediated cell adhesion and spreading. Competes with LIMS2 for interaction with ILK. Interacts with SH3/SH2 adapter NCK2, thereby linking the complex to cell surface receptors. Interacts (via LIM zinc-binding 5) with TGFB1I1.

It localises to the cell junction. It is found in the focal adhesion. The protein localises to the cell membrane. In terms of biological role, within the IPP (ILK-PINCH-PARVIN) complex, binds to F-actin, promoting F-actin bundling, a process required to generate force for actin cytoskeleton reorganization and subsequent dynamic cell adhesion events such as cell spreading and migration. The polypeptide is LIM and senescent cell antigen-like-containing domain protein 1 (Lims1) (Mus musculus (Mouse)).